Reading from the N-terminus, the 452-residue chain is Na(+)/H(+) antiporter NhaA (452 aa).

11 consecutive transmembrane segments (helical) span residues 23 to 43 (MMLF…LSTI), 71 to 91 (LLQF…GLEI), 108 to 128 (LPIV…LLVV), 136 to 156 (GAAI…AVLG), 165 to 185 (VFLT…IALF), 189 to 209 (HINI…YLMG), 216 to 236 (LGLY…SGIH), 316 to 336 (IVGY…TLGG), 349 to 369 (VFLG…YGFV), 385 to 405 (LMAV…IATL), and 418 to 438 (EAKL…IVTL).

The protein belongs to the NhaA Na(+)/H(+) (TC 2.A.33) antiporter family.

It localises to the cell inner membrane. It catalyses the reaction Na(+)(in) + 2 H(+)(out) = Na(+)(out) + 2 H(+)(in). Functionally, na(+)/H(+) antiporter that extrudes sodium in exchange for external protons. This Porphyromonas gingivalis (strain ATCC 33277 / DSM 20709 / CIP 103683 / JCM 12257 / NCTC 11834 / 2561) protein is Na(+)/H(+) antiporter NhaA.